The following is a 505-amino-acid chain: MTQTTAQRPVRTRIAPSPTGFPHVGTAYIALFNLAFAKAHGGEFILRIEDTDQSRSTEQSEQMILDALRWVGLDWAEGPDNGGPHAPYRQSERSEIYKQYAQELLDKGHAFRCFCTPEELDAMRAEQIARGENPHYDGRYANLPREESDKMAAEGKPFVIRMKVPTEGVCKVQDMLRGEVEIPWEQVDMQVLLKTDGLPTYHLANVVDDHLMEITHVIRGEEWLNSAPKHQLLYDYFGWEMPVLCHMPLLRNPDKSKLSKRKNPTSITYYRDAGVLPEALLNYLGRMGYSMPDDKEIFTLDEMIESFDITRVSLGGPIFDLEKLHWLNGEWLRALTPEQLKNKILDWANDSDKLTAIAAAIQPRIHLLSDAVNWGGFYFQNLPSITAESFEHKTLTPEQIMEILQIATWKLEALPEWSEDNIFKTLKGLSAALDIKLRDMMAPFFIAIAGSTSSTPVMNSMYVIGADMTLTRLRHAVEVLGGIGKKKLKKLEKTAADMPDFLAAE.

The 'HIGH' region motif lies at 16-26; the sequence is PSPTGFPHVGT. Positions 257-261 match the 'KMSKS' region motif; sequence KLSKR. Lysine 260 contributes to the ATP binding site.

The protein belongs to the class-I aminoacyl-tRNA synthetase family. Glutamate--tRNA ligase type 1 subfamily. As to quaternary structure, monomer.

Its subcellular location is the cytoplasm. The catalysed reaction is tRNA(Glu) + L-glutamate + ATP = L-glutamyl-tRNA(Glu) + AMP + diphosphate. In terms of biological role, catalyzes the attachment of glutamate to tRNA(Glu) in a two-step reaction: glutamate is first activated by ATP to form Glu-AMP and then transferred to the acceptor end of tRNA(Glu). The chain is Glutamate--tRNA ligase from Psychrobacter sp. (strain PRwf-1).